Reading from the N-terminus, the 678-residue chain is AAC-rich mRNA clone AAC4 protein (678 aa).

Residues Asn55 to Asn73 show a composition bias toward low complexity. Residues Asn55–Ser75 are disordered. Residues Ile243–Tyr263 form a helical membrane-spanning segment. Low complexity predominate over residues Asn318 to Asn346. The disordered stretch occupies residues Asn318–Gln347.

Its subcellular location is the membrane. The sequence is that of AAC-rich mRNA clone AAC4 protein (AAC4) from Dictyostelium discoideum (Social amoeba).